Here is a 255-residue protein sequence, read N- to C-terminus: Proteasome subunit alpha type-3 (255 aa).

Ser-2 is modified (N-acetylserine). N6-acetyllysine is present on residues Lys-57, Lys-206, and Lys-230. Phosphoserine occurs at positions 243 and 250.

Belongs to the peptidase T1A family. In terms of assembly, the 26S proteasome consists of a 20S proteasome core and two 19S regulatory subunits. The 20S proteasome core is a barrel-shaped complex made of 28 subunits that are arranged in four stacked rings. The two outer rings are each formed by seven alpha subunits, and the two inner rings are formed by seven beta subunits. The proteolytic activity is exerted by three beta-subunits PSMB5, PSMB6 and PSMB7. Interacts with AURKB. Interacts with CDKN1A. Interacts with MDM2 and RB1. Interacts with the C-terminus of TBXA2R isoform 2. Interacts with DNAJB2.

It localises to the cytoplasm. It is found in the nucleus. Functionally, component of the 20S core proteasome complex involved in the proteolytic degradation of most intracellular proteins. This complex plays numerous essential roles within the cell by associating with different regulatory particles. Associated with two 19S regulatory particles, forms the 26S proteasome and thus participates in the ATP-dependent degradation of ubiquitinated proteins. The 26S proteasome plays a key role in the maintenance of protein homeostasis by removing misfolded or damaged proteins that could impair cellular functions, and by removing proteins whose functions are no longer required. Associated with the PA200 or PA28, the 20S proteasome mediates ubiquitin-independent protein degradation. This type of proteolysis is required in several pathways including spermatogenesis (20S-PA200 complex) or generation of a subset of MHC class I-presented antigenic peptides (20S-PA28 complex). Binds to the C-terminus of CDKN1A and thereby mediates its degradation. Negatively regulates the membrane trafficking of the cell-surface thromboxane A2 receptor (TBXA2R) isoform 2. This chain is Proteasome subunit alpha type-3 (PSMA3), found in Bos taurus (Bovine).